The chain runs to 244 residues: MYQLPTSTELTFFPAEFPVYCRSSSFSSLMPCLTESWGDLPLKVNDSEDMVIYGFLQDAFSIGWTPSNLTSEEVKLEPREEIEPAMSTSVSPPTVAPAALQPKGRHYRGVRQRPWGKFAAEIRDPAKNGARVWLGTYESAEEAALAYGKAAFRMRGTKALLNFPHRIGLNEPEPVRVTVKRRLSESASSSVSSASESGSPKRRRKGVAAKQAELEVESRGPNVMKVGCQMFQLASSYWLVKIWS.

A DNA-binding region (AP2/ERF) is located at residues 106-164 (HYRGVRQRPWGKFAAEIRDPAKNGARVWLGTYESAEEAALAYGKAAFRMRGTKALLNFP). The span at 186 to 198 (SASSSVSSASESG) shows a compositional bias: low complexity. Positions 186 to 214 (SASSSVSSASESGSPKRRRKGVAAKQAEL) are disordered.

It belongs to the ethylene-response factor family. Class 1 subfamily. As to expression, present in stems.

The protein localises to the nucleus. Functionally, involved in the regulation of gene expression during fruit ripening, by stress factors and by components of stress signal transduction pathways. Transcription factor that binds to the GCC-box pathogenesis-related promoter element. Probably acts as a transcriptional activator and may be involved in disease resistance pathways. This Solanum lycopersicum (Tomato) protein is Ethylene-responsive transcription factor 1 (ERF1).